The primary structure comprises 606 residues: Vitamin B12 transporter BtuB (606 aa).

The first 22 residues, 1–22 (MQKSLLAIAMASLLTPVSYLHA), serve as a signal peptide directing secretion. The TonB box motif lies at 29-36 (DTVVVTAN). In terms of domain architecture, TBDR plug spans 41–153 (PLAEVIASTT…IAGVINVITT (113 aa)). The TBDR beta-barrel domain maps to 158 to 606 (SEGSVVSLGA…RYFANLTYQF (449 aa)). The TonB C-terminal box motif lies at 589 to 606 (LSYNAPERRYFANLTYQF).

It belongs to the TonB-dependent receptor family. BtuB (TC 1.B.14.3.1) subfamily.

Its subcellular location is the cell outer membrane. Its function is as follows. Involved in the active translocation of vitamin B12 (cyanocobalamin) across the outer membrane to the periplasmic space. It derives its energy for transport by interacting with the trans-periplasmic membrane protein TonB. The polypeptide is Vitamin B12 transporter BtuB (Vibrio vulnificus (strain CMCP6)).